Consider the following 549-residue polypeptide: Mitogen-activated protein kinase 15 (549 aa).

The interval 1 to 20 is ubiquitin-conjugating; it reads MCAAEVDRHVAQRYLIKRRL. Residues 14 to 305 enclose the Protein kinase domain; it reads YLIKRRLGKG…AEQALQHPYV (292 aa). ATP is bound by residues 20–28 and K43; that span reads LGKGAYGIV. Catalysis depends on D138, which acts as the Proton acceptor. T176 is modified (phosphothreonine). Positions 176–178 match the TXY motif; the sequence is TEY. Y178 is modified (phosphotyrosine). The interval 266–286 is necessary to interact with ESRRA, to regulate its subcellular localization and to inhibit its transcriptional activity; it reads LDALLPPDTPPEALDLLKRLL. The interval 301–382 is requires for interaction with GABARAP, MAP1LC3B AND GABARAPL1; the sequence is QHPYVQRFHC…ARTQSLKSGV (82 aa). Residues 370 to 507 form a disordered region; that stretch reads ASPARTQSLK…PEPRPGRRMF (138 aa). PXXXP motif repeat units follow at residues 380-384 and 387-391; these read SGVLP and PAETP. 2 PXXXP motif; regulates binding with chromatin and interaction with PCNA repeats span residues 395-399 and 403-407; these read RGPKP and PGHDP. The segment covering 403–416 has biased composition (basic and acidic residues); sequence PGHDPEHVEVRRQS. R451 carries the post-translational modification Omega-N-methylarginine. The span at 456 to 467 shows a compositional bias: polar residues; that stretch reads SLTSQAEAQAAN. A compositionally biased stretch (low complexity) spans 483–492; it reads AVGARRVPSR. Over residues 493–502 the composition is skewed to basic and acidic residues; that stretch reads LPREAPEPRP.

Belongs to the protein kinase superfamily. CMGC Ser/Thr protein kinase family. MAP kinase subfamily. As to quaternary structure, interacts with TGFB1I1. Interacts with CSK/c-Src, ABL1 and RET. Interacts with GABARAP, MAP1LC3B and GABARAPL1; controls, in a kinase-dependent fashion, both basal and starvation-induced autophagy. Interacts with ESRRA; promotes re-localization of ESRRA to the cytoplasm through a XPO1-dependent mechanism then inhibits ESRRA transcriptional activity. Interacts with PCNA; the interaction is chromatin binding- and kinase activity-dependent and prevents MDM2-mediated PCNA destruction by inhibiting the association of PCNA with MDM2. Interacts with DVL2. Interacts with CLIC3; MAPK15 does not phosphorylates CLIC3. Post-translationally, autophosphorylated on Thr-176 and Tyr-178; activates the enzyme. In terms of processing, ubiquitinated. Ubiquitination may allow its tight kinase activity regulation and rapid turnover. May be ubiquitinated by a SCF E3 ligase. As to expression, expressed at all stages of oocyte meiotic maturation.

It is found in the cytoplasm. Its subcellular location is the cytoskeleton. The protein localises to the cilium basal body. It localises to the cell junction. The protein resides in the tight junction. It is found in the microtubule organizing center. Its subcellular location is the centrosome. The protein localises to the centriole. It localises to the cytoplasmic vesicle. The protein resides in the autophagosome. It is found in the golgi apparatus. Its subcellular location is the nucleus. The protein localises to the spindle. It carries out the reaction L-seryl-[protein] + ATP = O-phospho-L-seryl-[protein] + ADP + H(+). The enzyme catalyses L-threonyl-[protein] + ATP = O-phospho-L-threonyl-[protein] + ADP + H(+). Its activity is regulated as follows. Activated by threonine and tyrosine phosphorylation. Inhibited by dual specificity phosphatases, such as DUSP1. Phosphorylation and activation in response to DNA damaging agents, serum stimulation. Constitutively activated when phosphorylated on Tyr-178. Activity depends on the relative rates of MAPK15 autophosphorylation and dephosphorylation by PTPN1. In terms of biological role, atypical MAPK protein that regulates several process such as autophagy, ciliogenesis, protein trafficking/secretion and genome integrity, in a kinase activity-dependent manner. Controls both, basal and starvation-induced autophagy throught its interaction with GABARAP, MAP1LC3B and GABARAPL1 leading to autophagosome formation, SQSTM1 degradation and reduced MAP1LC3B inhibitory phosphorylation. Regulates primary cilium formation and the localization of ciliary proteins involved in cilium structure, transport, and signaling. Prevents the relocation of the sugar-adding enzymes from the Golgi to the endoplasmic reticulum, thereby restricting the production of sugar-coated proteins. Upon amino-acid starvation, mediates transitional endoplasmic reticulum site disassembly and inhibition of secretion. Binds to chromatin leading to MAPK15 activation and interaction with PCNA, that which protects genomic integrity by inhibiting MDM2-mediated degradation of PCNA. Regulates DA transporter (DAT) activity and protein expression via activation of RhoA. In response to H(2)O(2) treatment phosphorylates ELAVL1, thus preventing it from binding to the PDCD4 3'UTR and rendering the PDCD4 mRNA accessible to miR-21 and leading to its degradation and loss of protein expression. Also functions in a kinase activity-independent manner as a negative regulator of growth. Phosphorylates in vitro FOS and MBP. During oocyte maturation, plays a key role in the microtubule organization and meiotic cell cycle progression in oocytes, fertilized eggs, and early embryos. Interacts with ESRRA promoting its re-localization from the nucleus to the cytoplasm and then prevents its transcriptional activity. This chain is Mitogen-activated protein kinase 15, found in Mus musculus (Mouse).